A 75-amino-acid chain; its full sequence is Tautomerase PptA (75 aa).

The active-site Proton acceptor; via imino nitrogen is P2.

Belongs to the 4-oxalocrotonate tautomerase family. PptA subfamily. Homodimer.

It is found in the cytoplasm. This Klebsiella pneumoniae (strain 342) protein is Tautomerase PptA.